Reading from the N-terminus, the 188-residue chain is Elongation factor P (188 aa).

Belongs to the elongation factor P family.

It localises to the cytoplasm. It functions in the pathway protein biosynthesis; polypeptide chain elongation. Its function is as follows. Involved in peptide bond synthesis. Stimulates efficient translation and peptide-bond synthesis on native or reconstituted 70S ribosomes in vitro. Probably functions indirectly by altering the affinity of the ribosome for aminoacyl-tRNA, thus increasing their reactivity as acceptors for peptidyl transferase. This chain is Elongation factor P, found in Aeromonas hydrophila subsp. hydrophila (strain ATCC 7966 / DSM 30187 / BCRC 13018 / CCUG 14551 / JCM 1027 / KCTC 2358 / NCIMB 9240 / NCTC 8049).